The primary structure comprises 676 residues: E3 ubiquitin-protein ligase ICP0 (676 aa).

Residues 13–52 (CCICLDAITGAARALPCLHAFCLACIRRWLEGRPTCPLCK) form an RING-type zinc finger. Disordered stretches follow at residues 101–153 (DLTA…GGRA), 266–517 (HLIP…AGAQ), and 555–676 (AAIS…AWRQ). Residues 123–153 (EAGGGAGGAEEAGEARGAGAGRAAGAAGGRA) are compositionally biased toward gly residues. Residues 286–303 (SDSDSEGSEDDSWSESEE) are compositionally biased toward acidic residues. Residues 304-314 (SSSGLSTSDLT) show a composition bias toward low complexity. Residues 315 to 328 (AIDDTETEPETDAE) are compositionally biased toward acidic residues. The span at 351–361 (YVSTRGRQTPA) shows a compositional bias: polar residues. 2 stretches are compositionally biased toward low complexity: residues 375-388 (GRAA…SSRS) and 397-411 (LPAA…QARA). Gly residues predominate over residues 422 to 439 (GAGLGVAAGETAGWGAGS). Residues 440–450 (EEGRGERRARL) are compositionally biased toward basic and acidic residues. Residues 474–484 (TPAPAPAPAPA) are compositionally biased toward pro residues. The segment covering 555 to 597 (AAISTRAPTPSPAGRAPAADPRRAGAPALAGAARAEVGRNGNP) has biased composition (low complexity).

It belongs to the simplexviruses ICp0 family. Auto-ubiquitinated. Post-translationally, transactivation activity is possibly regulated through phosphorylation by casein kinase II.

It catalyses the reaction S-ubiquitinyl-[E2 ubiquitin-conjugating enzyme]-L-cysteine + [acceptor protein]-L-lysine = [E2 ubiquitin-conjugating enzyme]-L-cysteine + N(6)-ubiquitinyl-[acceptor protein]-L-lysine.. Its function is as follows. Evades nuclear antiviral defenses triggered by dsDNA viruses. Acts during the initial stages of lytic infection and the reactivation of latent viral genome. Prevents the antiviral effect of nuclear bodies by degrading host PML and SP100. The chain is E3 ubiquitin-protein ligase ICP0 (BICP0) from Bovine herpesvirus 1.1 (strain Cooper) (BoHV-1).